Consider the following 136-residue polypeptide: MRTKILHIKGKVTAGLGEGRIFLSIPYYIESFKKYLGFEPYAGTLNIVIYDRISLENRLILDLAKGIIIPEHKEPNRVLGSVKAFPSSINSISPAAIVIPARTTHPKSVIEIISPYYLREKLSLKDGDEVEIEVYL.

Residue 15–20 coordinates CDP; the sequence is GLGEGR. Mg(2+) is bound by residues T44 and N46. FMN contacts are provided by T103 and E111. 116–119 provides a ligand contact to CDP; it reads YYLR.

It belongs to the archaeal riboflavin kinase family. Mg(2+) is required as a cofactor.

It carries out the reaction riboflavin + CTP = CDP + FMN + H(+). It functions in the pathway cofactor biosynthesis; FMN biosynthesis; FMN from riboflavin (CTP route): step 1/1. Catalyzes the CTP-dependent phosphorylation of riboflavin (vitamin B2) to form flavin mononucleotide (FMN). This Sulfurisphaera tokodaii (strain DSM 16993 / JCM 10545 / NBRC 100140 / 7) (Sulfolobus tokodaii) protein is Riboflavin kinase.